Here is a 264-residue protein sequence, read N- to C-terminus: Teichoic acids export ATP-binding protein TagH (264 aa).

Residues 22-243 (ERLKDVIVPF…YEKFLNDFKK (222 aa)) form the ABC transporter domain. 57–64 (GINGSGKS) is an ATP binding site.

Belongs to the ABC transporter superfamily. Teichoic acids exporter (TC 3.A.1.104.1) family. The complex is composed of two ATP-binding proteins (TagH) and two transmembrane proteins (TagG).

It is found in the cell membrane. The catalysed reaction is ATP + H2O + teichoic acidSide 1 = ADP + phosphate + teichoic acidSide 2.. Its function is as follows. Part of the ABC transporter complex TagGH involved in teichoic acids export. Responsible for energy coupling to the transport system. In Staphylococcus saprophyticus subsp. saprophyticus (strain ATCC 15305 / DSM 20229 / NCIMB 8711 / NCTC 7292 / S-41), this protein is Teichoic acids export ATP-binding protein TagH.